A 341-amino-acid polypeptide reads, in one-letter code: Uroporphyrinogen decarboxylase (341 aa).

Substrate contacts are provided by residues 23–27 (RQAGR), Asp73, Tyr148, Ser203, and His318.

It belongs to the uroporphyrinogen decarboxylase family. In terms of assembly, homodimer.

The protein localises to the cytoplasm. It carries out the reaction uroporphyrinogen III + 4 H(+) = coproporphyrinogen III + 4 CO2. Its pathway is porphyrin-containing compound metabolism; protoporphyrin-IX biosynthesis; coproporphyrinogen-III from 5-aminolevulinate: step 4/4. Catalyzes the decarboxylation of four acetate groups of uroporphyrinogen-III to yield coproporphyrinogen-III. The sequence is that of Uroporphyrinogen decarboxylase from Brucella anthropi (strain ATCC 49188 / DSM 6882 / CCUG 24695 / JCM 21032 / LMG 3331 / NBRC 15819 / NCTC 12168 / Alc 37) (Ochrobactrum anthropi).